An 806-amino-acid chain; its full sequence is G-type lectin S-receptor-like serine/threonine-protein kinase At1g61430 (806 aa).

An N-terminal signal peptide occupies residues 1-24; the sequence is MGKKRIVFFAYLPFFTIFMSFSFA. The Bulb-type lectin domain maps to 25 to 144; the sequence is GITKESPFSI…VSGRTLWQSF (120 aa). Over 25-425 the chain is Extracellular; the sequence is GITKESPFSI…ELDVNKRKMT (401 aa). N-linked (GlcNAc...) asparagine glycans are attached at residues N53, N94, N117, and N236. The EGF-like domain occupies 277–313; it reads PANSCDIYGVCGPFGLCVVSIPPKCKCFKGFVPKFAK. 2 disulfide bridges follow: C281–C293 and C287–C301. 3 N-linked (GlcNAc...) asparagine glycosylation sites follow: N319, N335, and N374. The PAN domain maps to 332–414; the sequence is CQGNSSGKDA…GELLSIRLAR (83 aa). Disulfide bonds link C367–C388 and C371–C377. Residues 426 to 446 form a helical membrane-spanning segment; sequence IVASTVSLTLFVIFGFAAFGF. Over 447–806 the chain is Cytoplasmic; that stretch reads WRCRVEHNAH…EMTESVIQGR (360 aa). The Protein kinase domain occupies 489–777; it reads FSLSNKLGPG…DLPLPKKPTF (289 aa). Residues 495–503 and K520 each bind ATP; that span reads LGPGGFGSV. Phosphoserine occurs at positions 526 and 541. The tract at residues 581–598 is caM-binding; that stretch reads RKKLELDWPKRFEIIEGI. The Proton acceptor role is filled by D617. 2 positions are modified to phosphoserine: S621 and S634. T651 is subject to Phosphothreonine. A phosphoserine mark is found at S694, S695, and S788.

Belongs to the protein kinase superfamily. Ser/Thr protein kinase family.

It localises to the cell membrane. The catalysed reaction is L-seryl-[protein] + ATP = O-phospho-L-seryl-[protein] + ADP + H(+). It catalyses the reaction L-threonyl-[protein] + ATP = O-phospho-L-threonyl-[protein] + ADP + H(+). This chain is G-type lectin S-receptor-like serine/threonine-protein kinase At1g61430, found in Arabidopsis thaliana (Mouse-ear cress).